The sequence spans 543 residues: MGQPAAGSILTLLRVLLLPLGPALAQDSPSAPTPGSPLSPTEYERFFALLTPTWKAETTCRLRATHGCRNPTIVQLDQYENHGLVPDGAVCSDLPYASWFESFCQFSQYRCSNHVYYAKRVRCSQPVSILSVNSFKELESPVEVSPTTMTSPVTSHIKATERQSFQAWPERLSNNVEELLQSSLSLAGQEQAAGHKQEQGQEQHKQDPTQEHKQDDGQEQEEQEEEQEEEGKQEEGQSVEDMLGRVGRAGLRIGSEPKPQSLSLSSDPHSFTARVRDVDSAPMMIENIQELIQSAQEMEEMYEEDAYWRSQNHGSLLQLPHKEALLVLCYSIVMNSCVMTPSAKAWKYLEEETFGFGKSVCDNLGRRHMALCPLCAFCSLKLEQCHSEANLQRQQCDASHKTPFISSLLTAQTMSMGTQAGTSESGRFYGLDVYGGLRMDFWCARLATKGCEDIRVSSWLQTEFLSFHNGDFPTKVCDTDYIQYPNYCSFKSQQCLMKNRNRKVSRMRCMQNETYNVLTPSKGEDLVLRWSQEFSTLALSRFG.

Residues 1-25 form the signal peptide; sequence MGQPAAGSILTLLRVLLLPLGPALA. The segment at 26-106 is pro-ACR binding; that stretch reads QDSPSAPTPG…ASWFESFCQF (81 aa). Residues 26–276 constitute a propeptide, removed in mature form; sequence QDSPSAPTPG…DPHSFTARVR (251 aa). Residues 187-239 form a disordered region; sequence AGQEQAAGHKQEQGQEQHKQDPTQEHKQDDGQEQEEQEEEQEEEGKQEEGQSV. A compositionally biased stretch (basic and acidic residues) spans 193–216; it reads AGHKQEQGQEQHKQDPTQEHKQDD. The segment covering 217–232 has biased composition (acidic residues); the sequence is GQEQEEQEEEQEEEGK. Residues 319–427 form a pro-ACR binding region; it reads LPHKEALLVL…TQAGTSESGR (109 aa).

Binds proacrosin (ACR). Does not bind the mature form of ACR. In terms of processing, the N-terminus is blocked. Phosphorylated on Tyr residues in capacitated sperm. Post-translationally, synthesized as a 60-kDa precursor, the 32-kDa mature form is post-translationally produced by the removal of the N-terminal half of the precursor during sperm maturation in the testis and/or epididymis. As to expression, specifically expressed in testis.

The protein localises to the secreted. Its subcellular location is the cytoplasmic vesicle. It localises to the secretory vesicle. The protein resides in the acrosome. Its function is as follows. Acrosomal protein that maintains proacrosin (pro-ACR) as an enzymatically inactive zymogen in the acrosome. Involved also in the acrosome formation. The chain is Acrosin-binding protein (ACRBP) from Cavia porcellus (Guinea pig).